The following is a 588-amino-acid chain: Pectinesterase 4 (588 aa).

The N-terminal stretch at 1-24 is a signal peptide; it reads MIGKVVVSVASILLIVGVAIGVVA. N-linked (GlcNAc...) asparagine glycans are attached at residues Asn86, Asn206, and Asn342. 2 residues coordinate substrate: Thr353 and Gln383. Asp406 acts as the Proton donor in catalysis. Asp427 serves as the catalytic Nucleophile. Substrate-binding residues include Arg496 and Trp498.

It in the N-terminal section; belongs to the PMEI family. The protein in the C-terminal section; belongs to the pectinesterase family. Expressed in pollen grains and pollen tubes.

The protein resides in the secreted. It localises to the cell wall. The catalysed reaction is [(1-&gt;4)-alpha-D-galacturonosyl methyl ester](n) + n H2O = [(1-&gt;4)-alpha-D-galacturonosyl](n) + n methanol + n H(+). The protein operates within glycan metabolism; pectin degradation; 2-dehydro-3-deoxy-D-gluconate from pectin: step 1/5. Functionally, acts in the modification of cell walls via demethylesterification of cell wall pectin. Plays an important role in growth of pollen tubes in female floral tissues, possibly via enhancing the interaction between the pollen tube and female floral tissues by modification of the cell walls. This Arabidopsis thaliana (Mouse-ear cress) protein is Pectinesterase 4 (PME4).